Reading from the N-terminus, the 73-residue chain is uncharacterized protein (73 aa).

The N-terminal stretch at 1–28 (MKFLLSVIAGLLILALYLFWKVQPPVWI) is a signal peptide.

This is an uncharacterized protein from Bacillus subtilis (strain 168).